The following is a 504-amino-acid chain: Anaerobic nitric oxide reductase transcription regulator NorR (504 aa).

Residue aspartate 57 is modified to 4-aspartylphosphate. The Sigma-54 factor interaction domain maps to 187–416; the sequence is MIGLSPGMTQ…LEHAIHRAVV (230 aa). ATP is bound by residues 215–222 and 278–287; these read GETGTGKE and ADNGTLFLDE. The H-T-H motif DNA-binding region spans 479 to 498; sequence WAACARMLETDVANLHRLAK.

Its pathway is nitrogen metabolism; nitric oxide reduction. Its function is as follows. Required for the expression of anaerobic nitric oxide (NO) reductase, acts as a transcriptional activator for at least the norVW operon. Activation also requires sigma-54. The protein is Anaerobic nitric oxide reductase transcription regulator NorR of Escherichia coli O6:H1 (strain CFT073 / ATCC 700928 / UPEC).